The following is a 327-amino-acid chain: GTP 3',8-cyclase (327 aa).

The region spanning 8-232 (AFARKFYYLR…LQRSRSDGPA (225 aa)) is the Radical SAM core domain. Residue Arg-17 coordinates GTP. The [4Fe-4S] cluster site is built by Cys-24 and Cys-28. Residue Tyr-30 participates in S-adenosyl-L-methionine binding. Residue Cys-31 participates in [4Fe-4S] cluster binding. A GTP-binding site is contributed by Arg-66. Position 70 (Gly-70) interacts with S-adenosyl-L-methionine. Residue Thr-97 participates in GTP binding. Ser-121 lines the S-adenosyl-L-methionine pocket. Lys-158 serves as a coordination point for GTP. An S-adenosyl-L-methionine-binding site is contributed by Met-192. The [4Fe-4S] cluster site is built by Cys-255 and Cys-258. Residue 260–262 (RLR) coordinates GTP. Cys-272 provides a ligand contact to [4Fe-4S] cluster.

Belongs to the radical SAM superfamily. MoaA family. In terms of assembly, monomer and homodimer. [4Fe-4S] cluster is required as a cofactor.

It catalyses the reaction GTP + AH2 + S-adenosyl-L-methionine = (8S)-3',8-cyclo-7,8-dihydroguanosine 5'-triphosphate + 5'-deoxyadenosine + L-methionine + A + H(+). Its pathway is cofactor biosynthesis; molybdopterin biosynthesis. In terms of biological role, catalyzes the cyclization of GTP to (8S)-3',8-cyclo-7,8-dihydroguanosine 5'-triphosphate. In Photorhabdus laumondii subsp. laumondii (strain DSM 15139 / CIP 105565 / TT01) (Photorhabdus luminescens subsp. laumondii), this protein is GTP 3',8-cyclase.